A 681-amino-acid polypeptide reads, in one-letter code: DNA ligase (681 aa).

Residues 45 to 49 (DFDFD), 94 to 95 (SL), and Glu-120 contribute to the NAD(+) site. The N6-AMP-lysine intermediate role is filled by Lys-122. NAD(+) is bound by residues Arg-143, Glu-177, Lys-289, and Lys-313. Zn(2+) contacts are provided by Cys-403, Cys-406, Cys-421, and Cys-426. The 89-residue stretch at 593-681 (ADQQPFAGQS…SLKIDFKNLI (89 aa)) folds into the BRCT domain.

This sequence belongs to the NAD-dependent DNA ligase family. LigA subfamily. Mg(2+) is required as a cofactor. The cofactor is Mn(2+).

It carries out the reaction NAD(+) + (deoxyribonucleotide)n-3'-hydroxyl + 5'-phospho-(deoxyribonucleotide)m = (deoxyribonucleotide)n+m + AMP + beta-nicotinamide D-nucleotide.. In terms of biological role, DNA ligase that catalyzes the formation of phosphodiester linkages between 5'-phosphoryl and 3'-hydroxyl groups in double-stranded DNA using NAD as a coenzyme and as the energy source for the reaction. It is essential for DNA replication and repair of damaged DNA. The chain is DNA ligase from Leptospira interrogans serogroup Icterohaemorrhagiae serovar Lai (strain 56601).